A 103-amino-acid polypeptide reads, in one-letter code: uncharacterized protein (103 aa).

2 disordered regions span residues 1–20 (MIEL…WPKG) and 44–71 (LERM…HHLG). An N-terminal signal peptide occupies residues 1 to 34 (MIELSYAPDVAGRRSNWPKGSGVNTWTAIRWTFA).

This is an uncharacterized protein from Mycobacterium tuberculosis (strain CDC 1551 / Oshkosh).